The chain runs to 269 residues: 4-hydroxy-tetrahydrodipicolinate reductase (269 aa).

NAD(+) contacts are provided by residues 10–15 (GANGRM), E36, 99–101 (GTT), and 123–126 (AANF). H156 (proton donor/acceptor) is an active-site residue. H157 lines the (S)-2,3,4,5-tetrahydrodipicolinate pocket. The active-site Proton donor is K160. 166–167 (GT) is a (S)-2,3,4,5-tetrahydrodipicolinate binding site.

The protein belongs to the DapB family.

The protein localises to the cytoplasm. The enzyme catalyses (S)-2,3,4,5-tetrahydrodipicolinate + NAD(+) + H2O = (2S,4S)-4-hydroxy-2,3,4,5-tetrahydrodipicolinate + NADH + H(+). It carries out the reaction (S)-2,3,4,5-tetrahydrodipicolinate + NADP(+) + H2O = (2S,4S)-4-hydroxy-2,3,4,5-tetrahydrodipicolinate + NADPH + H(+). The protein operates within amino-acid biosynthesis; L-lysine biosynthesis via DAP pathway; (S)-tetrahydrodipicolinate from L-aspartate: step 4/4. In terms of biological role, catalyzes the conversion of 4-hydroxy-tetrahydrodipicolinate (HTPA) to tetrahydrodipicolinate. The polypeptide is 4-hydroxy-tetrahydrodipicolinate reductase (Neisseria meningitidis serogroup B (strain ATCC BAA-335 / MC58)).